The chain runs to 877 residues: Alanine--tRNA ligase (877 aa).

Residues His-565, His-569, Cys-667, and His-671 each contribute to the Zn(2+) site.

The protein belongs to the class-II aminoacyl-tRNA synthetase family. It depends on Zn(2+) as a cofactor.

It localises to the cytoplasm. It carries out the reaction tRNA(Ala) + L-alanine + ATP = L-alanyl-tRNA(Ala) + AMP + diphosphate. Functionally, catalyzes the attachment of alanine to tRNA(Ala) in a two-step reaction: alanine is first activated by ATP to form Ala-AMP and then transferred to the acceptor end of tRNA(Ala). Also edits incorrectly charged Ser-tRNA(Ala) and Gly-tRNA(Ala) via its editing domain. This chain is Alanine--tRNA ligase, found in Chromobacterium violaceum (strain ATCC 12472 / DSM 30191 / JCM 1249 / CCUG 213 / NBRC 12614 / NCIMB 9131 / NCTC 9757 / MK).